The sequence spans 842 residues: Translation initiation factor IF-2 (842 aa).

Residues 94–259 form a disordered region; it reads QRSPEEIQAE…HGFQNPTGPV (166 aa). Residues 96–138 are compositionally biased toward basic and acidic residues; it reads SPEEIQAEQKRELDERRAAENAARDKVEAEVRQRNEEQARRQA. Residues 139-148 are compositionally biased toward low complexity; it reads ADSAVAAPAP. Pro residues predominate over residues 149-159; that stretch reads AAKPEPAPAAA. Residues 160 to 172 are compositionally biased toward low complexity; the sequence is PAPVVADAPASED. 2 stretches are compositionally biased toward basic and acidic residues: residues 173 to 202 and 226 to 235; these read AAARAAERKKDETRRNESRTRDDDRRRGEA and TTDEESDGAR. Residues 236 to 249 are compositionally biased toward basic residues; the sequence is RGRGGKGKLKKRNQ. The tr-type G domain occupies 342–509; that stretch reads SRAPVVTVMG…AVLLQAEILE (168 aa). The tract at residues 351 to 358 is G1; sequence GHVDHGKT. 351–358 provides a ligand contact to GTP; sequence GHVDHGKT. Residues 376–380 are G2; sequence GITQH. A G3 region spans residues 397–400; the sequence is DTPG. GTP is bound by residues 397–401 and 451–454; these read DTPGH and NKID. Residues 451 to 454 form a G4 region; that stretch reads NKID. A G5 region spans residues 487-489; sequence SAK.

It belongs to the TRAFAC class translation factor GTPase superfamily. Classic translation factor GTPase family. IF-2 subfamily.

Its subcellular location is the cytoplasm. In terms of biological role, one of the essential components for the initiation of protein synthesis. Protects formylmethionyl-tRNA from spontaneous hydrolysis and promotes its binding to the 30S ribosomal subunits. Also involved in the hydrolysis of GTP during the formation of the 70S ribosomal complex. The sequence is that of Translation initiation factor IF-2 from Pseudomonas putida (strain GB-1).